Reading from the N-terminus, the 328-residue chain is COP9 signalosome complex subunit 6 (328 aa).

Residues 42–175 form the MPN domain; that stretch reads VALHPLVILN…VSVFESVIDI (134 aa).

This sequence belongs to the peptidase M67A family. CSN6 subfamily. As to quaternary structure, component of the CSN complex, composed of COPS1/GPS1, COPS2, COPS3, COPS4, COPS5, COPS6, COPS7 (COPS7A or COPS7B), COPS8 and COPS9. In the complex, it probably interacts directly with COPS2, COPS4, COPS5, COPS7 (COPS7A or COPS7B) and COPS9. Interacts with the translation initiation factor EIF3S6. Interacts weakly with RBX1. Directly interacts with COP1 and 14-3-3 protein sigma/SFN. Interacts with ERCC6.

Its subcellular location is the cytoplasm. The protein resides in the nucleus. Component of the COP9 signalosome complex (CSN), a complex involved in various cellular and developmental processes. The CSN complex is an essential regulator of the ubiquitin (Ubl) conjugation pathway by mediating the deneddylation of the cullin subunits of SCF-type E3 ligase complexes, leading to decrease the Ubl ligase activity of SCF-type complexes such as SCF, CSA or DDB2. The complex is also involved in phosphorylation of p53/TP53, c-jun/JUN, IkappaBalpha/NFKBIA, ITPK1 and IRF8, possibly via its association with CK2 and PKD kinases. CSN-dependent phosphorylation of TP53 and JUN promotes and protects degradation by the Ubl system, respectively. Has some glucocorticoid receptor-responsive activity. Stabilizes COP1 through reducing COP1 auto-ubiquitination and decelerating COP1 turnover rate, hence regulates the ubiquitination of COP1 targets, including SFN. In Pongo abelii (Sumatran orangutan), this protein is COP9 signalosome complex subunit 6 (COPS6).